The primary structure comprises 149 residues: Calmodulin (149 aa).

A2 bears the N-acetylalanine mark. 4 EF-hand domains span residues E8–N43, P44–E79, D81–K116, and L117–K149. K14 carries the N6,N6-dimethyllysine modification. Residues D21, D23, D25, T27, E32, D57, D59, N61, T63, E68, D94, D96, N98, and E105 each contribute to the Ca(2+) site. The residue at position 116 (K116) is an N6,N6,N6-trimethyllysine. The Ca(2+) site is built by D130, D132, D134, H136, and E141.

The protein belongs to the calmodulin family. The pantophobiac mutant CAM2 is undermethylated on Lys-116.

In terms of biological role, calmodulin mediates the control of a large number of enzymes, ion channels and other proteins by Ca(2+). Among the enzymes to be stimulated by the calmodulin-Ca(2+) complex are a number of protein kinases and phosphatases. This Paramecium tetraurelia protein is Calmodulin (CAM).